The primary structure comprises 658 residues: NADPH-dependent diflavin oxidoreductase 1 (658 aa).

The region spanning 16-160 is the Flavodoxin-like domain; that stretch reads LTILYMTQTG…ELGPWMNRFW (145 aa). FMN contacts are provided by residues 22 to 27, 69 to 72, 107 to 116, and Asp142; these read TQTGTS, STTG, and LGDSTYPRFC. In terms of domain architecture, FAD-binding FR-type spans 215–502; sequence QGWSISILDK…IKPGYLTLPP (288 aa). Residues Arg400, 430–433, and 474–477 contribute to the FAD site; these read REFS and GLCT. NADP(+) contacts are provided by residues Thr514, 574 to 575, and 580 to 584; these read SR and KTYVQ. Trp657 provides a ligand contact to FAD.

This sequence belongs to the NADPH-dependent diflavin oxidoreductase NDOR1 family. The protein in the N-terminal section; belongs to the flavodoxin family. In the C-terminal section; belongs to the flavoprotein pyridine nucleotide cytochrome reductase family. Interacts with DRE2; as part of the cytosolic iron-sulfur (Fe-S) protein assembly (CIA) machinery. FAD is required as a cofactor. FMN serves as cofactor.

Its subcellular location is the cytoplasm. The protein localises to the mitochondrion. The enzyme catalyses 2 oxidized [2Fe-2S]-[protein] + NADPH = 2 reduced [2Fe-2S]-[protein] + NADP(+) + H(+). In terms of biological role, NADPH-dependent reductase which is a central component of the cytosolic iron-sulfur (Fe-S) protein assembly (CIA) machinery. Transfers electrons from NADPH via its FAD and FMN prosthetic groups to the [2Fe-2S] cluster of DRE2, another key component of the CIA machinery. In turn, this reduced cluster provides electrons for assembly of cytosolic iron-sulfur cluster proteins. Positively controls H(2)O(2)-induced cell death. The sequence is that of NADPH-dependent diflavin oxidoreductase 1 from Mycosarcoma maydis (Corn smut fungus).